Consider the following 376-residue polypeptide: Chaperone protein DnaJ (376 aa).

In terms of domain architecture, J spans 4 to 70; that stretch reads DYYQILGVSK…QKRAAYDRFG (67 aa). The segment at 139–217 adopts a CR-type zinc-finger fold; sequence GVEKNISFSS…CHGLGRYHKQ (79 aa). 8 residues coordinate Zn(2+): Cys-152, Cys-155, Cys-169, Cys-172, Cys-191, Cys-194, Cys-205, and Cys-208. CXXCXGXG motif repeat units lie at residues 152–159, 169–176, 191–198, and 205–212; these read CDTCHGSG, CDACGGVG, CHKCQGNG, and CKKCHGLG.

It belongs to the DnaJ family. As to quaternary structure, homodimer. The cofactor is Zn(2+).

It localises to the cytoplasm. Its function is as follows. Participates actively in the response to hyperosmotic and heat shock by preventing the aggregation of stress-denatured proteins and by disaggregating proteins, also in an autonomous, DnaK-independent fashion. Unfolded proteins bind initially to DnaJ; upon interaction with the DnaJ-bound protein, DnaK hydrolyzes its bound ATP, resulting in the formation of a stable complex. GrpE releases ADP from DnaK; ATP binding to DnaK triggers the release of the substrate protein, thus completing the reaction cycle. Several rounds of ATP-dependent interactions between DnaJ, DnaK and GrpE are required for fully efficient folding. Also involved, together with DnaK and GrpE, in the DNA replication of plasmids through activation of initiation proteins. In Rickettsia bellii (strain OSU 85-389), this protein is Chaperone protein DnaJ.